The primary structure comprises 164 residues: Phospholipase A and acyltransferase 4 (164 aa).

The tract at residues 1–40 is essential for its ability regulate keratinocyte differentiation; it reads MASPHQEPKPGDLIEIFRLGYEHWALYIGDGYVIHLAPPS. Residues 1–134 are Cytoplasmic-facing; that stretch reads MASPHQEPKP…SRCKQVEKAK (134 aa). The LRAT domain maps to 13–129; it reads LIEIFRLGYE…LRYGKSRCKQ (117 aa). Active-site residues include His23 and His35. The active-site Acyl-thioester intermediate is the Cys113. Positions 124–164 are interaction with TGM1; sequence KSRCKQVEKAKVEVGVATALGILVVAGCSFAIRRYQKKATA. Residues 135–155 form a helical membrane-spanning segment; that stretch reads VEVGVATALGILVVAGCSFAI. Topologically, residues 156–164 are lumenal; sequence RRYQKKATA.

Belongs to the H-rev107 family. In terms of assembly, interacts with TGM1. Widely expressed.

It is found in the membrane. The enzyme catalyses a 1,2-diacyl-sn-glycero-3-phosphocholine + H2O = a 1-acyl-sn-glycero-3-phosphocholine + a fatty acid + H(+). It carries out the reaction a 1,2-diacyl-sn-glycero-3-phosphocholine + H2O = a 2-acyl-sn-glycero-3-phosphocholine + a fatty acid + H(+). It catalyses the reaction 1,2-dihexadecanoyl-sn-glycero-3-phosphocholine + H2O = 1-hexadecanoyl-sn-glycero-3-phosphocholine + hexadecanoate + H(+). The catalysed reaction is 1,2-dihexadecanoyl-sn-glycero-3-phosphocholine + H2O = 2-hexadecanoyl-sn-glycero-3-phosphocholine + hexadecanoate + H(+). The enzyme catalyses 1-hexadecanoyl-2-(9Z-octadecenoyl)-sn-glycero-3-phosphocholine + H2O = 2-(9Z-octadecenoyl)-sn-glycero-3-phosphocholine + hexadecanoate + H(+). It carries out the reaction 1-hexadecanoyl-2-(9Z-octadecenoyl)-sn-glycero-3-phosphocholine + H2O = 1-hexadecanoyl-sn-glycero-3-phosphocholine + (9Z)-octadecenoate + H(+). It catalyses the reaction 1-hexadecanoyl-2-(5Z,8Z,11Z,14Z-eicosatetraenoyl)-sn-glycero-3-phosphocholine + H2O = 2-(5Z,8Z,11Z,14Z)-eicosatetraenoyl-sn-glycero-3-phosphocholine + hexadecanoate + H(+). The catalysed reaction is 1-hexadecanoyl-2-(9Z,12Z-octadecadienoyl)-sn-glycero-3-phosphoethanolamine + H2O = 1-hexadecanoyl-sn-glycero-3-phosphoethanolamine + (9Z,12Z)-octadecadienoate + H(+). The enzyme catalyses 1-hexadecanoyl-2-(9Z,12Z-octadecadienoyl)-sn-glycero-3-phosphoethanolamine + H2O = 2-(9Z,12Z)-octadecadienoyl-sn-glycero-3-phosphoethanolamine + hexadecanoate + H(+). It carries out the reaction 1-hexadecanoyl-2-(5Z,8Z,11Z,14Z-eicosatetraenoyl)-sn-glycero-3-phosphoethanolamine + H2O = 2-(5Z,8Z,11Z,14Z)-eicosatetraenoyl-sn-glycero-3-phosphoethanolamine + hexadecanoate + H(+). It catalyses the reaction 1-hexanoyl-2-acyl-sn-glycero-3-phosphocholine + H2O = hexanoate + a 2-acyl-sn-glycero-3-phosphocholine + H(+). The catalysed reaction is 1,2-diheptadecanoyl-sn-glycero-3-phosphoethanolamine + 1-(9Z-octadecenoyl)-2-hexadecanoyl-sn-glycero-3-phosphocholine = 1,2-diheptadecanoyl-sn-glycero-3-phospho-N-hexadecanoyl-ethanolamine + 1-(9Z-octadecenoyl)-sn-glycero-3-phosphocholine + H(+). The enzyme catalyses 1,2-diheptadecanoyl-sn-glycero-3-phosphoethanolamine + 1-(9Z-octadecenoyl)-2-hexadecanoyl-sn-glycero-3-phosphocholine = 1,2-diheptadecanoyl-sn-glycero-3-phospho-N-(9Z-octadecenoyl)-ethanolamine + 2-hexadecanoyl-sn-glycero-3-phosphocholine + H(+). Its function is as follows. Exhibits both phospholipase A1/2 and acyltransferase activities. Shows phospholipase A1 (PLA1) and A2 (PLA2), catalyzing the calcium-independent release of fatty acids from the sn-1 or sn-2 position of glycerophospholipids. For most substrates, PLA1 activity is much higher than PLA2 activity. Shows O-acyltransferase activity, catalyzing the transfer of a fatty acyl group from glycerophospholipid to the hydroxyl group of lysophospholipid. Shows N-acyltransferase activity, catalyzing the calcium-independent transfer of a fatty acyl group at the sn-1 position of phosphatidylcholine (PC) and other glycerophospholipids to the primary amine of phosphatidylethanolamine (PE), forming N-acylphosphatidylethanolamine (NAPE), which serves as precursor for N-acylethanolamines (NAEs). Promotes keratinocyte differentiation via activation of TGM1. The sequence is that of Phospholipase A and acyltransferase 4 from Homo sapiens (Human).